The primary structure comprises 252 residues: Imidazole glycerol phosphate synthase subunit HisF (252 aa).

Active-site residues include D11 and D130.

It belongs to the HisA/HisF family. As to quaternary structure, heterodimer of HisH and HisF.

It localises to the cytoplasm. The enzyme catalyses 5-[(5-phospho-1-deoxy-D-ribulos-1-ylimino)methylamino]-1-(5-phospho-beta-D-ribosyl)imidazole-4-carboxamide + L-glutamine = D-erythro-1-(imidazol-4-yl)glycerol 3-phosphate + 5-amino-1-(5-phospho-beta-D-ribosyl)imidazole-4-carboxamide + L-glutamate + H(+). The protein operates within amino-acid biosynthesis; L-histidine biosynthesis; L-histidine from 5-phospho-alpha-D-ribose 1-diphosphate: step 5/9. IGPS catalyzes the conversion of PRFAR and glutamine to IGP, AICAR and glutamate. The HisF subunit catalyzes the cyclization activity that produces IGP and AICAR from PRFAR using the ammonia provided by the HisH subunit. The protein is Imidazole glycerol phosphate synthase subunit HisF of Streptococcus gordonii (strain Challis / ATCC 35105 / BCRC 15272 / CH1 / DL1 / V288).